Consider the following 626-residue polypeptide: Polygalacturonase 1 beta-like protein 3 (626 aa).

The first 23 residues, 1-23, serve as a signal peptide directing secretion; that stretch reads MLKQFLLLQSFSFFLFNVVIVGG. Residues 117-120 form an FXXY 1 repeat; the sequence is FSVY. N-linked (GlcNAc...) asparagine glycosylation occurs at Asn124. FXXY repeat units lie at residues 125-128, 139-142, 153-156, 167-170, 181-184, 195-198, 209-212, 223-226, 238-241, 252-255, and 266-269; these read FTNY, FKNY, FRRY, FTVY, FNSY, FTAY, FKTY, FTSY, and FSNY. Asn141 carries N-linked (GlcNAc...) asparagine glycosylation. Asn277 carries an N-linked (GlcNAc...) asparagine glycan. FXXY repeat units lie at residues 280-283, 294-297, 308-311, 322-325, 336-339, 350-353, and 364-367; these read FTSY, FNNY, FANY, FSSY, FVNY, FTGY, and FKTY. The N-linked (GlcNAc...) asparagine glycan is linked to Asn370. 2 FXXY repeats span residues 373 to 376 and 383 to 386; these read FKDY and FAKY. N-linked (GlcNAc...) asparagine glycosylation is found at Asn387 and Asn465. A BURP domain is found at 411–625; sequence FFRESSLKEG…FENDMNWAIA (215 aa).

In terms of tissue distribution, expressed in flowers and stems. Detected in trichomes, guard cells, root vascular tissue, root hairs, pollen sacs, sepals and styles of pistils.

It localises to the secreted. It is found in the extracellular space. The protein localises to the apoplast. The protein resides in the cell wall. Its function is as follows. Involved in cell size determination. May serve as a chaperone for expansins through the secretory pathway. The polypeptide is Polygalacturonase 1 beta-like protein 3 (Arabidopsis thaliana (Mouse-ear cress)).